The primary structure comprises 722 residues: G2-specific protein kinase fin1 (722 aa).

A Protein kinase domain is found at 4–281; that stretch reads YKILECIGHG…TYQLLRSPIL (278 aa). Residues 10 to 18 and lysine 33 each bind ATP; that span reads IGHGSFGRI. Catalysis depends on aspartate 151, which acts as the Proton acceptor. The tract at residues 528–557 is disordered; it reads LSVESDETAVSASSGESVPTDSTLTDTKSK. The segment covering 535-546 has biased composition (polar residues); it reads TAVSASSGESVP.

The protein belongs to the protein kinase superfamily. Ser/Thr protein kinase family. NIMA subfamily.

Its subcellular location is the cytoplasm. It localises to the cytoskeleton. The protein localises to the microtubule organizing center. The protein resides in the spindle pole body. The enzyme catalyses L-seryl-[protein] + ATP = O-phospho-L-seryl-[protein] + ADP + H(+). The catalysed reaction is L-threonyl-[protein] + ATP = O-phospho-L-threonyl-[protein] + ADP + H(+). Its function is as follows. Promotes chromosome condensation and nuclear envelope dynamics during mitosis. Activity appears at metaphase-anaphase transition. The polypeptide is G2-specific protein kinase fin1 (fin1) (Schizosaccharomyces pombe (strain 972 / ATCC 24843) (Fission yeast)).